The following is a 914-amino-acid chain: Scaffold attachment factor B1 (914 aa).

The span at 1 to 24 shows a compositional bias: low complexity; the sequence is MAETLSGLGDSGAAGAAALSSASS. Residues 1–33 are disordered; sequence MAETLSGLGDSGAAGAAALSSASSETGTRRLSD. The residue at position 2 (Ala2) is an N-acetylalanine. A phosphoserine mark is found at Ser24 and Ser55. The region spanning 31–65 is the SAP domain; that stretch reads LSDLRVIDLRAELRKRNVDSSGNKSVLMERLKKAI. Residues 64 to 117 are disordered; sequence AIEDEGGNPDEIEITSEGNKKTSKRSSKGRKPEEEGVEDNGLEENSGDGQEDVE. Acidic residues predominate over residues 67-77; it reads DEGGNPDEIEI. The residue at position 79 (Ser79) is a Phosphoserine. Positions 98-117 are enriched in acidic residues; the sequence is EGVEDNGLEENSGDGQEDVE. Glycyl lysine isopeptide (Lys-Gly) (interchain with G-Cter in SUMO2) cross-links involve residues Lys172 and Lys186. Thr188 is subject to Phosphothreonine. Phosphoserine is present on residues Ser195, Ser197, and Ser209. Residues 221-407 are disordered; it reads LGETCKSEPV…EKGRSSCGRN (187 aa). Positions 225 to 234 are enriched in basic and acidic residues; the sequence is CKSEPVKEES. Residue Lys231 forms a Glycyl lysine isopeptide (Lys-Gly) (interchain with G-Cter in SUMO) linkage. The span at 275-286 shows a compositional bias: polar residues; that stretch reads SESTAHAQSSKA. The segment covering 293–309 has biased composition (basic and acidic residues); sequence VKREPAEQPGDGERTDC. Residue Lys294 forms a Glycyl lysine isopeptide (Lys-Gly) (interchain with G-Cter in SUMO) linkage. A compositionally biased stretch (low complexity) spans 319 to 330; that stretch reads EQSSAASELAEA. Positions 346–359 are enriched in basic and acidic residues; it reads EARDSKEDGRKFDF. A compositionally biased stretch (polar residues) spans 371–383; sequence ESSTSEGADQKMS. Lys381 participates in a covalent cross-link: Glycyl lysine isopeptide (Lys-Gly) (interchain with G-Cter in SUMO2). 2 positions are modified to phosphoserine: Ser383 and Ser384. The span at 390 to 401 shows a compositional bias: basic and acidic residues; it reads DTKRLSKEEKGR. Residue Lys392 forms a Glycyl lysine isopeptide (Lys-Gly) (interchain with G-Cter in SUMO2) linkage. The 79-residue stretch at 406–484 folds into the RRM domain; sequence RNFWVSGLSS…KMISVEKAKN (79 aa). Ser415 carries the phosphoserine modification. Basic and acidic residues-rich tracts occupy residues 477–551 and 559–570; these read ISVE…ERSR and GTERTVVMDKSK. Disordered regions lie at residues 477–636, 670–706, and 748–914; these read ISVE…QAQW, RERM…QERR, and FDHR…TRRY. Residues Lys483, Lys514, Lys543, and Lys570 each participate in a glycyl lysine isopeptide (Lys-Gly) (interchain with G-Cter in SUMO2) cross-link. The segment at 528–791 is interaction with POLR2A; SFRS1; SFRS9 and SFRS10; it reads GDDGSGEKSK…RHGGPERHGR (264 aa). Lys578 participates in a covalent cross-link: Glycyl lysine isopeptide (Lys-Gly) (interchain with G-Cter in SUMO1); alternate. Lys578 is covalently cross-linked (Glycyl lysine isopeptide (Lys-Gly) (interchain with G-Cter in SUMO2); alternate). A phosphoserine mark is found at Ser580, Ser582, Ser601, and Ser604. The span at 581–636 shows a compositional bias: basic and acidic residues; the sequence is GSKERASKSLDRKSASREKRSVVSFDKVKEPRKSRDSESHRVRERSEREQRMQAQW. The Nuclear localization signal signature appears at 599–616; the sequence is KRSVVSFDKVKEPRKSRD. Positions 599-914 are interaction with SAFB2; that stretch reads KRSVVSFDKV…PSDARFTRRY (316 aa). An N6-acetyllysine modification is found at Lys607. Over residues 748-795 the composition is skewed to basic and acidic residues; sequence FDHRDRGRYPDHSVDRREGSRSMMGEREGQHYPERHGGPERHGRDSRD. An Omega-N-methylarginine modification is found at Arg810. Composition is skewed to basic and acidic residues over residues 816-831 and 840-850; these read PRRD…DDRA and MMDRDHKRWQG. Residue Lys846 forms a Glycyl lysine isopeptide (Lys-Gly) (interchain with G-Cter in SUMO2) linkage. 3 positions are modified to asymmetric dimethylarginine: Arg867, Arg873, and Arg883. The segment covering 891–900 has biased composition (gly residues); that stretch reads GMQGGFGGQS. Residues 904-914 show a composition bias toward basic and acidic residues; sequence RPSDARFTRRY.

As to quaternary structure, monomer and homodimer. Interacts with KHDRBS3. Interacts with CLK2. Interacts with POLR2A, ASF/SRSF1, SRp30c/SRFS9 and TRA2B/SFRS10. Interacts with SRPK1 and inhibits its activity. Interacts with RBMX. Interacts with FUS. Interacts with ZBED4. Post-translationally, sumoylated by PIAS1 with SUMO1 and SUMO2/3, desumoylated by SENP1. Sumoylation is required for transcriptional repressor activity.

It localises to the nucleus. Binds to scaffold/matrix attachment region (S/MAR) DNA and forms a molecular assembly point to allow the formation of a 'transcriptosomal' complex (consisting of SR proteins and RNA polymerase II) coupling transcription and RNA processing. Functions as an estrogen receptor corepressor and can also bind to the HSP27 promoter and decrease its transcription. Thereby acts as a negative regulator of cell proliferation. When associated with RBMX, binds to and stimulates transcription from the SREBF1 promoter. In Pongo abelii (Sumatran orangutan), this protein is Scaffold attachment factor B1 (SAFB).